Here is a 537-residue protein sequence, read N- to C-terminus: GTPase LSG1-1 (537 aa).

Residues 158-362 (WRQLWRVLER…LCDCPGLVFP (205 aa)) form the CP-type G domain. Residues 176-180 (DARDP) carry the DARXP motif motif. The G4 stretch occupies residues 206-209 (NKAD). A GTP-binding site is contributed by 206-209 (NKAD). The interval 234-236 (SAK) is G5. Residues 311 to 318 (GYPNVGKS) are G1. Residue 314–319 (NVGKSS) participates in GTP binding. The segment at 337 to 341 (GKTKH) is G2. The interval 355-358 (DCPG) is G3. G358 is a GTP binding site. Residues 484-508 (LGAETREGSQTEKKGEEAPSLGLDQ) form a disordered region. Over residues 487–500 (ETREGSQTEKKGEE) the composition is skewed to basic and acidic residues.

The protein belongs to the TRAFAC class YlqF/YawG GTPase family. In terms of tissue distribution, ubiquitous, with the highest expression in stem and hypsophyll on day 66.

Its subcellular location is the cytoplasm. Functionally, GTPase that might be redundant with LSG1-2 for ribosome biogenesis. Binds to 23S rRNA. The polypeptide is GTPase LSG1-1 (Arabidopsis thaliana (Mouse-ear cress)).